The chain runs to 222 residues: Glutathione S-transferase alpha-4 (222 aa).

Met-1 is modified (N-acetylmethionine). The region spanning 3–83 (VKPKLYYFQG…YLAAKYNLYG (81 aa)) is the GST N-terminal domain. Glutathione-binding positions include Tyr-9, 54-55 (QV), and 67-68 (QT). In terms of domain architecture, GST C-terminal spans 85–208 (DLKERVRIDM…QPGSQRKPPP (124 aa)).

Belongs to the GST superfamily. Alpha family. In terms of assembly, homodimer.

The protein localises to the cytoplasm. The enzyme catalyses RX + glutathione = an S-substituted glutathione + a halide anion + H(+). Its function is as follows. Conjugation of reduced glutathione to a wide number of exogenous and endogenous hydrophobic electrophiles. This is Glutathione S-transferase alpha-4 (Gsta4) from Rattus norvegicus (Rat).